The primary structure comprises 65 residues: Large ribosomal subunit protein bL33 (65 aa).

Residues 20–40 form a disordered region; that stretch reads VPPSEKRSPGVSRYTTEKNRR.

The protein belongs to the bacterial ribosomal protein bL33 family.

The protein is Large ribosomal subunit protein bL33 of Prochlorococcus marinus (strain MIT 9211).